Reading from the N-terminus, the 217-residue chain is Histone H1-gamma, late (217 aa).

Disordered regions lie at residues 1–21 (MSAA…HPPS) and 80–217 (GKGA…PAKK). In terms of domain architecture, H15 spans 17-91 (AHPPSSQMVV…GASGSFKLGK (75 aa)). Residues 104–113 (IAAKKAKLAA) are compositionally biased toward basic residues. Basic and acidic residues predominate over residues 114–123 (KKKEQREKKA). The span at 124-217 (LKTKARKEKV…AKKAAKPAKK (94 aa)) shows a compositional bias: basic residues.

Belongs to the histone H1/H5 family.

It is found in the nucleus. The protein resides in the chromosome. Its function is as follows. Histones H1 are necessary for the condensation of nucleosome chains into higher-order structures. This chain is Histone H1-gamma, late, found in Strongylocentrotus purpuratus (Purple sea urchin).